The chain runs to 256 residues: Exosome complex component RRP41-like (256 aa).

This sequence belongs to the RNase PH family. As to quaternary structure, probable component of the RNA exosome complex. In terms of tissue distribution, highly expressed in imbibed seeds and young seedlings.

The protein resides in the cytoplasm. Its subcellular location is the nucleus. Functionally, non-catalytic component of the RNA exosome complex which has 3'-&gt;5' exoribonuclease activity and participates in a multitude of cellular RNA processing, maturation and degradation events. In vitro, is a processive phosphorolytic exonuclease and requires a single-stranded poly(A) tail on the substrate RNA for its activity. Plays an important role in seed germination and early seedling growth by mediating specific cytoplasmic mRNA decay of transcripts coding for the abscisic acid (ABA) biosynthetic enzymes NCED5 and NCED6, and the ABA signaling transcription factors ABI3 and ABI4. In Arabidopsis thaliana (Mouse-ear cress), this protein is Exosome complex component RRP41-like.